The primary structure comprises 199 residues: FMN-dependent NADH:quinone oxidoreductase 2 (199 aa).

FMN contacts are provided by residues serine 10, 17-19 (SDS), and 135-138 (TKGG).

Belongs to the azoreductase type 1 family. Homodimer. It depends on FMN as a cofactor.

It catalyses the reaction 2 a quinone + NADH + H(+) = 2 a 1,4-benzosemiquinone + NAD(+). The enzyme catalyses N,N-dimethyl-1,4-phenylenediamine + anthranilate + 2 NAD(+) = 2-(4-dimethylaminophenyl)diazenylbenzoate + 2 NADH + 2 H(+). Quinone reductase that provides resistance to thiol-specific stress caused by electrophilic quinones. Functionally, also exhibits azoreductase activity. Catalyzes the reductive cleavage of the azo bond in aromatic azo compounds to the corresponding amines. This chain is FMN-dependent NADH:quinone oxidoreductase 2, found in Mesoplasma florum (strain ATCC 33453 / NBRC 100688 / NCTC 11704 / L1) (Acholeplasma florum).